The chain runs to 1060 residues: Outer capsid protein VP2 (1060 aa).

This sequence belongs to the orbivirus VP2 family.

Its subcellular location is the virion. In terms of biological role, the VP2 protein is one of the two proteins (with VP5) which constitute the virus particle outer capsid. It is the major target of the host immunogenic response. The polypeptide is Outer capsid protein VP2 (Segment-2) (Camelus dromedarius (Dromedary)).